We begin with the raw amino-acid sequence, 1498 residues long: Mitogen-activated protein kinase kinase kinase nsy-1 (1498 aa).

2 disordered regions span residues 1–35 (MSQNNKRQVQHNHEMSNDVCPLPLPPRGAPPPTAY) and 190–209 (LQSYDKNNNDDDSKPPFART). Pro residues predominate over residues 22-33 (LPLPPRGAPPPT). A Protein kinase domain is found at 664–925 (SNERVVLGKG…AKDLLQDPFI (262 aa)). ATP-binding positions include 670–678 (LGKGTYGTV) and Lys-693. The Proton acceptor role is filled by Asp-790. The disordered stretch occupies residues 1022–1050 (IDHARNRTFSSSSPVPDGQSSAGTNMSHP). The span at 1031–1042 (SSSSPVPDGQSS) shows a compositional bias: low complexity. Residues 1276–1314 (SREERVREDRKELRTLQEENEILIERLLQVERELNAQLK) adopt a coiled-coil conformation. The interval 1461–1498 (QPVFLSPMRSRDDSLDDYHSSSADDMYTGAAAETSSGN) is disordered. Residues 1469–1479 (RSRDDSLDDYH) are compositionally biased toward basic and acidic residues.

It belongs to the protein kinase superfamily. STE Ser/Thr protein kinase family. MAP kinase kinase kinase subfamily. As to quaternary structure, interacts with unc-43. Interacts with sek-1. Mg(2+) serves as cofactor. May be phosphorylated upon pathogenic bacterial infection. May be regulated by proteasomal degradation mediated by the E3-ubiquitin ligase rle-1. As to expression, expressed in intestine, hypodermis, rectal gland cell and neurons including sensory AWC neurons.

It is found in the cell projection. Its subcellular location is the axon. The protein localises to the perikaryon. The enzyme catalyses L-seryl-[protein] + ATP = O-phospho-L-seryl-[protein] + ADP + H(+). It carries out the reaction L-threonyl-[protein] + ATP = O-phospho-L-threonyl-[protein] + ADP + H(+). Serine/threonine-protein kinase which, by phosphorylating and activating sek-1, plays an important role in the activation of the p38 pathway also composed of the downstream effectors sek-1 and pmk-1. Downstream of CaMKII unc-43 and adapter protein tir-1, plays a role in determining asymmetric cell fates in olfactory AWC neurons during neuronal development. Activation results in the repression of odorant receptor str-2 expression in one of the 2 AWC neurons. Involved in resistance to pathogenic Gram-positive and Gram-negative bacterial and fungal infection. Involved in resistance to the nematotoxic C.cinerea galectin Cgl2. Probably by activating the sek1/pmk-1/skn-1 pathway, involved in the up-regulation of gcs-1 and glutathione-S-transferase gst-4 expression upon bacterial infection. Probably downstream of tir-1 and nipi-3, required for the expression of antimicrobial peptide nlp-29 in the epidermis in response to fungal infection or physical injury. Plays a role in resistance to several environmental stresses including oxidative, protein misfolding (ER) and osmotic stresses, and DNA-damaging reagents. Plays a role in the stabilization of transcription factor rnt-1 in the intestine during oxidative stress. Involved in germline apoptosis induced by heavy metals, such as Cu(2+). In addition, plays a role in the up-regulation of gcs-1 upon arsenite treatment, most likely through activation of pmk-1, to confer protection against toxicity induced by heavy metals. Plays a role downstream of tir-1 in regulating susceptibility to anoxia. Involved in egg laying. The chain is Mitogen-activated protein kinase kinase kinase nsy-1 from Caenorhabditis elegans.